The sequence spans 393 residues: Lysine/ornithine decarboxylase (393 aa).

Lysine 51 is subject to N6-(pyridoxal phosphate)lysine. Cysteine 323 functions as the Proton donor; shared with dimeric partner in the catalytic mechanism.

The protein belongs to the Orn/Lys/Arg decarboxylase class-II family. In terms of assembly, homodimer. Pyridoxal 5'-phosphate is required as a cofactor.

The catalysed reaction is L-lysine + H(+) = cadaverine + CO2. The enzyme catalyses L-ornithine + H(+) = putrescine + CO2. The protein operates within amine and polyamine biosynthesis; putrescine biosynthesis via L-ornithine pathway; putrescine from L-ornithine: step 1/1. With respect to regulation, inhibited competitively by both alpha-difluoromethyllysine and alpha-difluoromethylornithine. Its function is as follows. Decarboxylates both L-lysine and L-ornithine with similar catalytic efficiency. The chain is Lysine/ornithine decarboxylase (ldc) from Selenomonas ruminantium.